We begin with the raw amino-acid sequence, 173 residues long: MKISEYTKEMMDENSFIDLAYMALSEKGKEVNLYELIDEFKAIGNYSDEEVETRVVQFYTDLNTDGRFLSTGEYMWGLRDWYSVDDIEEKIAPTVQKFDILDEEDEDSPKIALLGEDEVEDELDLLPSDGDEENVDTEDEEVEDELDEAGLVVEPDEEFEDEEDEFDDEEEEE.

The HTH HARE-type domain maps to 14 to 81 (NSFIDLAYMA…GEYMWGLRDW (68 aa)). The disordered stretch occupies residues 113-173 (LLGEDEVEDE…DEFDDEEEEE (61 aa)). Positions 115–173 (GEDEVEDELDLLPSDGDEENVDTEDEEVEDELDEAGLVVEPDEEFEDEEDEFDDEEEEE) are enriched in acidic residues.

This sequence belongs to the RpoE family. In terms of assembly, RNAP is composed of a core of 2 alpha, a beta and a beta' subunits. The core is associated with a delta subunit and one of several sigma factors.

Functionally, participates in both the initiation and recycling phases of transcription. In the presence of the delta subunit, RNAP displays an increased specificity of transcription, a decreased affinity for nucleic acids, and an increased efficiency of RNA synthesis because of enhanced recycling. In Macrococcus caseolyticus (strain JCSC5402) (Macrococcoides caseolyticum), this protein is Probable DNA-directed RNA polymerase subunit delta.